The sequence spans 157 residues: MAKGDFKLFDVVLDETIGRSTPDVEHERAVAIFDLIEENSFEPVGHPGGPYRLSLSLVNARLVFTITTQDGEAVATHILSLTPLRRIIKDYFMICESYYEAIRSSTPSQIEAIDMGRRGIHNDGSQTLKDRLKDKINLDFDSARRLFTLVCVLYWRG.

This sequence belongs to the UPF0262 family.

The sequence is that of UPF0262 protein Avi_0642 from Allorhizobium ampelinum (strain ATCC BAA-846 / DSM 112012 / S4) (Agrobacterium vitis (strain S4)).